The chain runs to 550 residues: Cyclopentanone 1,2-monooxygenase (550 aa).

FAD-binding positions include 31 to 32 (FT), Asp51, Trp60, Asp71, Tyr77, and Val123.

It belongs to the FAD-binding monooxygenase family. As to quaternary structure, homotetramer. FAD is required as a cofactor.

It catalyses the reaction cyclopentanone + NADPH + O2 + H(+) = 5-valerolactone + NADP(+) + H2O. It participates in alcohol metabolism; cyclopentanol degradation; 5-valerolactone from cyclopentanol: step 2/2. Its function is as follows. Catalyzes a Baeyer-Villiger oxidation reaction, i.e. the insertion of an oxygen atom into a carbon-carbon bond adjacent to a carbonyl, which converts ketones to esters or lactones using NADPH as an electron donor. Converts cyclopentanone to 5-valerolactone, a step in the degradation pathway of cyclopentanol. Besides cycloalkanones, can also act on methylated and other alkylated cycloalkanones, and on methylated cycloalkenones, with high enantioselectivity in some cases. Cannot use NADH instead of NADPH. This chain is Cyclopentanone 1,2-monooxygenase (cpnB), found in Comamonas sp. (strain NCIMB 9872).